A 399-amino-acid chain; its full sequence is Phosphoglycerate kinase (399 aa).

Residues 24 to 26 (DYN), arginine 39, 62 to 65 (HLGR), arginine 121, and arginine 154 each bind substrate. ATP-binding positions include lysine 204, glycine 295, glutamate 326, and 355-358 (GGDS).

Belongs to the phosphoglycerate kinase family. Monomer.

The protein resides in the cytoplasm. The catalysed reaction is (2R)-3-phosphoglycerate + ATP = (2R)-3-phospho-glyceroyl phosphate + ADP. It participates in carbohydrate degradation; glycolysis; pyruvate from D-glyceraldehyde 3-phosphate: step 2/5. The polypeptide is Phosphoglycerate kinase (Elusimicrobium minutum (strain Pei191)).